The following is a 921-amino-acid chain: Phototropin-1B (921 aa).

Gly residues predominate over residues 1 to 11; that stretch reads MASKGTEGGHG. Disordered stretches follow at residues 1–59 and 88–118; these read MASK…SPFL and TGLP…QSAA. The span at 40–51 shows a compositional bias: low complexity; that stretch reads SSASSFRTAAAA. Residues 97–117 show a composition bias toward polar residues; the sequence is RPSSGSARTSSEDNPQQQQSA. The PAS 1 domain occupies 123-197; it reads VSEELRAALS…KIRQSLANGS (75 aa). FMN-binding positions include 172 to 177, arginine 190, asparagine 205, asparagine 215, and glutamine 236; that span reads NCRFLQ. Residue cysteine 173 is modified to S-4a-FMN cysteine. The 55-residue stretch at 197-251 folds into the PAC 1 domain; the sequence is SNYCGRILNYKKDGTPFWNLLTIAPIKDEDGRLLKFIGMQVEVSKYTEGKKDTVV. Residues 286–295 are compositionally biased toward polar residues; it reads RSLSESSNNT. Disordered regions lie at residues 286-345 and 366-391; these read RSLS…QVNR and EKNM…SFED. Basic and acidic residues-rich tracts occupy residues 312–321 and 366–376; these read PSKRSSESGS and EKNMLKPRDED. Residues 400–473 form the PAS 2 domain; sequence RGIDLATTLE…RKIRDAIDNQ (74 aa). FMN is bound by residues 449–454, arginine 467, asparagine 482, asparagine 492, and glutamine 513; that span reads NCRFLQ. Cysteine 450 bears the S-4a-FMN cysteine mark. One can recognise a PAC 2 domain in the interval 474-528; the sequence is AEVTVQLINYTKSGKKFWNLFHLQPMRDQKGDVQYFIGVQLDGTEHVQDDAAKEG. Positions 594-881 constitute a Protein kinase domain; that stretch reads FRPVKPLGSG…ANEIKGHPFF (288 aa). Residues 600-608 and lysine 623 each bind ATP; that span reads LGSGDTGSV. The Proton acceptor role is filled by aspartate 719.

The protein belongs to the protein kinase superfamily. Ser/Thr protein kinase family. Homodimer. The cofactor is FMN. Post-translationally, autophosphorylated in response to blue light irradiation. In terms of processing, 2 molecules of FMN bind covalently to cysteines after exposure to blue light and are reversed in the dark.

The catalysed reaction is L-seryl-[protein] + ATP = O-phospho-L-seryl-[protein] + ADP + H(+). The enzyme catalyses L-threonyl-[protein] + ATP = O-phospho-L-threonyl-[protein] + ADP + H(+). Its function is as follows. Protein kinase that acts as a blue light photoreceptor in a signal-transduction pathway for phototropic responses. Regulates a wide range of physiological activities in plants that maximize the efficiency of photosynthesis, such as chloroplast relocations, stomata opening, and leaf expansion. This chain is Phototropin-1B (PHOT1B), found in Oryza sativa subsp. japonica (Rice).